We begin with the raw amino-acid sequence, 246 residues long: uncharacterized protein (246 aa).

Residues 7-29 (GRGALASTGGCVVLAVAALMFVF) form a helical membrane-spanning segment.

Its subcellular location is the membrane. This is an uncharacterized protein from Treponema pallidum (strain Nichols).